We begin with the raw amino-acid sequence, 268 residues long: Small ribosomal subunit protein uS3 (268 aa).

Residues I38 to K106 form the KH type-2 domain. Residues N217–G268 form a disordered region. Residues S237–G268 show a composition bias toward low complexity.

The protein belongs to the universal ribosomal protein uS3 family. In terms of assembly, part of the 30S ribosomal subunit. Forms a tight complex with proteins S10 and S14.

Binds the lower part of the 30S subunit head. Binds mRNA in the 70S ribosome, positioning it for translation. In Rhodococcus erythropolis (strain PR4 / NBRC 100887), this protein is Small ribosomal subunit protein uS3.